A 143-amino-acid chain; its full sequence is Hemoglobin anodic subunit alpha (143 aa).

Position 2 is an N-acetylserine (Ser2). In terms of domain architecture, Globin spans 2 to 143 (SLSAKDMAVV…FTLALSERYR (142 aa)). His60 serves as a coordination point for O2. His89 is a binding site for heme b.

It belongs to the globin family. As to quaternary structure, heterotetramer of two alpha chains and two beta chains. In terms of tissue distribution, red blood cells.

In terms of biological role, involved in oxygen transport from gills to the various peripheral tissues. The sequence is that of Hemoglobin anodic subunit alpha (hba) from Anguilla anguilla (European freshwater eel).